A 132-amino-acid chain; its full sequence is Fluoride-specific ion channel FluC 2 (132 aa).

Helical transmembrane passes span 5–25 (VAVF…NLLG), 34–54 (TFIE…FFAA), 59–79 (PLVQ…MSAF), and 95–115 (VLYL…GIVI). Residues Gly71 and Thr74 each contribute to the Na(+) site.

Belongs to the fluoride channel Fluc/FEX (TC 1.A.43) family.

It localises to the cell membrane. The catalysed reaction is fluoride(in) = fluoride(out). Na(+) is not transported, but it plays an essential structural role and its presence is essential for fluoride channel function. Functionally, fluoride-specific ion channel. Important for reducing fluoride concentration in the cell, thus reducing its toxicity. In Bacillus licheniformis (strain ATCC 14580 / DSM 13 / JCM 2505 / CCUG 7422 / NBRC 12200 / NCIMB 9375 / NCTC 10341 / NRRL NRS-1264 / Gibson 46), this protein is Fluoride-specific ion channel FluC 2.